The chain runs to 218 residues: GTP cyclohydrolase 1 (218 aa).

Residues cysteine 109, histidine 112, and cysteine 180 each contribute to the Zn(2+) site.

The protein belongs to the GTP cyclohydrolase I family. As to quaternary structure, toroid-shaped homodecamer, composed of two pentamers of five dimers.

It carries out the reaction GTP + H2O = 7,8-dihydroneopterin 3'-triphosphate + formate + H(+). The protein operates within cofactor biosynthesis; 7,8-dihydroneopterin triphosphate biosynthesis; 7,8-dihydroneopterin triphosphate from GTP: step 1/1. This chain is GTP cyclohydrolase 1, found in Aeromonas hydrophila subsp. hydrophila (strain ATCC 7966 / DSM 30187 / BCRC 13018 / CCUG 14551 / JCM 1027 / KCTC 2358 / NCIMB 9240 / NCTC 8049).